The following is a 198-amino-acid chain: Ribonuclease HII 1 (198 aa).

The 190-residue stretch at 7–196 (ELTAGVDEAG…VRAALARAAA (190 aa)) folds into the RNase H type-2 domain. The a divalent metal cation site is built by Asp-13, Glu-14, and Asp-105.

It belongs to the RNase HII family. Mn(2+) serves as cofactor. It depends on Mg(2+) as a cofactor.

It localises to the cytoplasm. It carries out the reaction Endonucleolytic cleavage to 5'-phosphomonoester.. In terms of biological role, endonuclease that specifically degrades the RNA of RNA-DNA hybrids. The polypeptide is Ribonuclease HII 1 (Methylibium petroleiphilum (strain ATCC BAA-1232 / LMG 22953 / PM1)).